A 430-amino-acid chain; its full sequence is GTPase Obg (430 aa).

The 158-residue stretch at 1 to 158 (MFVDQVTISL…LDVTLELKLL (158 aa)) folds into the Obg domain. Positions 118–145 (RGGRGGRGNSRFATPRNPAPDFSENGEP) are disordered. Positions 159 to 329 (ADVGLVGFPS…LLYAIADKLD (171 aa)) constitute an OBG-type G domain. Residues 165–172 (GFPSVGKS), 190–194 (FTTIK), 212–215 (DLPG), 282–285 (NKMD), and 310–312 (STI) contribute to the GTP site. 2 residues coordinate Mg(2+): serine 172 and threonine 192. Positions 352–430 (KHTPSQDKFT…ILGGEFEFVE (79 aa)) constitute an OCT domain.

Belongs to the TRAFAC class OBG-HflX-like GTPase superfamily. OBG GTPase family. As to quaternary structure, monomer. The cofactor is Mg(2+).

The protein localises to the cytoplasm. Functionally, an essential GTPase which binds GTP, GDP and possibly (p)ppGpp with moderate affinity, with high nucleotide exchange rates and a fairly low GTP hydrolysis rate. Plays a role in control of the cell cycle, stress response, ribosome biogenesis and in those bacteria that undergo differentiation, in morphogenesis control. The protein is GTPase Obg of Staphylococcus haemolyticus (strain JCSC1435).